A 434-amino-acid polypeptide reads, in one-letter code: Histidinol dehydrogenase (434 aa).

Residues tyrosine 130, glutamine 188, and asparagine 211 each coordinate NAD(+). Substrate is bound by residues serine 237, glutamine 259, and histidine 262. The Zn(2+) site is built by glutamine 259 and histidine 262. Residues glutamate 326 and histidine 327 each act as proton acceptor in the active site. Substrate contacts are provided by histidine 327, aspartate 360, glutamate 414, and histidine 419. Residue aspartate 360 coordinates Zn(2+). Histidine 419 is a Zn(2+) binding site.

It belongs to the histidinol dehydrogenase family. In terms of assembly, homodimer. Requires Zn(2+) as cofactor.

It carries out the reaction L-histidinol + 2 NAD(+) + H2O = L-histidine + 2 NADH + 3 H(+). It participates in amino-acid biosynthesis; L-histidine biosynthesis; L-histidine from 5-phospho-alpha-D-ribose 1-diphosphate: step 9/9. Functionally, catalyzes the sequential NAD-dependent oxidations of L-histidinol to L-histidinaldehyde and then to L-histidine. The polypeptide is Histidinol dehydrogenase (Salmonella paratyphi A (strain ATCC 9150 / SARB42)).